We begin with the raw amino-acid sequence, 172 residues long: Small ribosomal subunit protein uS5 (172 aa).

Positions 17-80 (LREKMISVNR…DEARRKMVKV (64 aa)) constitute an S5 DRBM domain.

The protein belongs to the universal ribosomal protein uS5 family. In terms of assembly, part of the 30S ribosomal subunit. Contacts proteins S4 and S8.

In terms of biological role, with S4 and S12 plays an important role in translational accuracy. Its function is as follows. Located at the back of the 30S subunit body where it stabilizes the conformation of the head with respect to the body. The polypeptide is Small ribosomal subunit protein uS5 (Cupriavidus metallidurans (strain ATCC 43123 / DSM 2839 / NBRC 102507 / CH34) (Ralstonia metallidurans)).